The sequence spans 429 residues: MKERTIQPVNNGLNGNITIPGDKSISHRAVMFGAIAEGTTTIKGFLPGADCLSTISCFKEMGVDIVQDGDEVTVVGKGLEGLQEPKAVLDVGNSGTTIRLMSGILANTPFFSCVQGDASIAKRPMKRVTNPLKQMGANIDGREEGTFTPLTVRGGDLKAIEYTSPVASAQVKSAILLAGLRAEGVTAVTEPHISRDHTERMLEAFGVKVTREGKTVKLAGGQKLTATDVQVPGDVSSAAFFLVAGAIIPNSKLVLENVGMNPTRTGIIDVLEKMGATFTVEPINEGASEPAANITIETSSLKGIEIGGDIIPRLIDEIPVIALAATQAEGITVIKDAHELKVKETNRIDTVVAELTKLGARIEATDDGMIIYGKSALKGNTVNSYGDHRIGMMLAIAGCIAEGKTIIEDAEAVGVSYPTFFEELQKLAK.

Lys23, Ser24, and Arg28 together coordinate 3-phosphoshikimate. Lys23 lines the phosphoenolpyruvate pocket. Gly95 and Arg123 together coordinate phosphoenolpyruvate. Positions 168, 170, 316, and 343 each coordinate 3-phosphoshikimate. Gln170 is a phosphoenolpyruvate binding site. The Proton acceptor role is filled by Asp316. The phosphoenolpyruvate site is built by Arg347 and Arg389.

It belongs to the EPSP synthase family. Monomer.

The protein resides in the cytoplasm. It catalyses the reaction 3-phosphoshikimate + phosphoenolpyruvate = 5-O-(1-carboxyvinyl)-3-phosphoshikimate + phosphate. It participates in metabolic intermediate biosynthesis; chorismate biosynthesis; chorismate from D-erythrose 4-phosphate and phosphoenolpyruvate: step 6/7. Catalyzes the transfer of the enolpyruvyl moiety of phosphoenolpyruvate (PEP) to the 5-hydroxyl of shikimate-3-phosphate (S3P) to produce enolpyruvyl shikimate-3-phosphate and inorganic phosphate. The sequence is that of 3-phosphoshikimate 1-carboxyvinyltransferase from Bacillus thuringiensis subsp. konkukian (strain 97-27).